A 574-amino-acid chain; its full sequence is Septation ring formation regulator EzrA (574 aa).

Residues 1–7 (MSSGLIL) are Extracellular-facing. The helical transmembrane segment at 8–26 (LIVAIVLLVIIAYLVGVII) threads the bilayer. Topologically, residues 27–574 (RKRNDTLITS…YEKTRERIRF (548 aa)) are cytoplasmic. Coiled coils occupy residues 102–131 (NFIRAKHEINSVESQLNLVEEDITAIREAL), 161–190 (ENEDNFGSTMAEIEKQMKNIEAEFSQFVAL), 276–379 (VTLD…QQEK), and 459–493 (QLEALMDELSRGRINIEAVSRLSEVATAAIANLEE).

Belongs to the EzrA family.

It is found in the cell membrane. Functionally, negative regulator of FtsZ ring formation; modulates the frequency and position of FtsZ ring formation. Inhibits FtsZ ring formation at polar sites. Interacts either with FtsZ or with one of its binding partners to promote depolymerization. This is Septation ring formation regulator EzrA from Streptococcus equi subsp. zooepidemicus (strain MGCS10565).